Here is a 66-residue protein sequence, read N- to C-terminus: Muscarinic toxin alpha (66 aa).

Disulfide bonds link C3–C24, C17–C42, C46–C58, and C59–C64.

The protein belongs to the three-finger toxin family. Short-chain subfamily. Aminergic toxin sub-subfamily. As to expression, expressed by the venom gland.

It is found in the secreted. Functionally, selectively binds with high-affinity to the a2B-adrenoceptor subtype (ADRA2B). The toxin reversibly binds to ADRA2B, and its mode of inhibition is non-competitive. The toxin has also been described to bind with high affinity to all muscarinic receptor subtypes (Ki=23 nM (on CHRM1), Ki=44 nM (on CHRM2), Ki=3 nM (on CHRM3), Ki=5 nM (on CHRM4), and Ki=8 nM (on CHRM5)) but no other data support these affinity values. The chain is Muscarinic toxin alpha from Dendroaspis polylepis polylepis (Black mamba).